The primary structure comprises 394 residues: Flagellin B (394 aa).

The protein belongs to the bacterial flagellin family.

It localises to the secreted. The protein localises to the bacterial flagellum. Flagellin is the subunit protein which polymerizes to form the filaments of bacterial flagella. This is Flagellin B (flaB) from Rhizobium meliloti (strain 1021) (Ensifer meliloti).